Consider the following 426-residue polypeptide: Cytochrome b-c1 complex subunit 2, mitochondrial (426 aa).

Residues 1-30 (MKSFTRNLRRFQTPRRNLHGISYTPKKVEG) constitute a mitochondrion transit peptide.

The protein belongs to the peptidase M16 family. UQCRC2/QCR2 subfamily. In terms of assembly, component of the ubiquinol-cytochrome c oxidoreductase (cytochrome b-c1 complex, complex III, CIII), a multisubunit enzyme composed of 3 respiratory subunits cytochrome b, cytochrome c1 and Rieske protein, 2 core protein subunits, and additional low-molecular weight protein subunits. The complex exists as an obligatory dimer and forms supercomplexes (SCs) in the inner mitochondrial membrane with cytochrome c oxidase (complex IV, CIV).

It is found in the mitochondrion inner membrane. Component of the ubiquinol-cytochrome c oxidoreductase, a multisubunit transmembrane complex that is part of the mitochondrial electron transport chain which drives oxidative phosphorylation. The respiratory chain contains 3 multisubunit complexes succinate dehydrogenase (complex II, CII), ubiquinol-cytochrome c oxidoreductase (cytochrome b-c1 complex, complex III, CIII) and cytochrome c oxidase (complex IV, CIV), that cooperate to transfer electrons derived from NADH and succinate to molecular oxygen, creating an electrochemical gradient over the inner membrane that drives transmembrane transport and the ATP synthase. The cytochrome b-c1 complex catalyzes electron transfer from ubiquinol to cytochrome c, linking this redox reaction to translocation of protons across the mitochondrial inner membrane, with protons being carried across the membrane as hydrogens on the quinol. In the process called Q cycle, 2 protons are consumed from the matrix, 4 protons are released into the intermembrane space and 2 electrons are passed to cytochrome c. This chain is Cytochrome b-c1 complex subunit 2, mitochondrial (qcr2), found in Schizosaccharomyces pombe (strain 972 / ATCC 24843) (Fission yeast).